We begin with the raw amino-acid sequence, 131 residues long: Small ribosomal subunit protein bS6 (131 aa).

Positions 98–131 (EASPMVKAKDERRERRDDFANETADDSDAGDSEE) are disordered. Residues 104 to 116 (KAKDERRERRDDF) are compositionally biased toward basic and acidic residues. Residues 120–131 (TADDSDAGDSEE) are compositionally biased toward acidic residues.

Belongs to the bacterial ribosomal protein bS6 family.

Its function is as follows. Binds together with bS18 to 16S ribosomal RNA. The polypeptide is Small ribosomal subunit protein bS6 (Enterobacter sp. (strain 638)).